Here is a 331-residue protein sequence, read N- to C-terminus: Flagellar P-ring protein (331 aa).

The N-terminal stretch at 1-22 (MRKVTIFIIIIVALTGFGSVRI) is a signal peptide.

This sequence belongs to the FlgI family. In terms of assembly, the basal body constitutes a major portion of the flagellar organelle and consists of four rings (L,P,S, and M) mounted on a central rod.

Its subcellular location is the periplasm. The protein resides in the bacterial flagellum basal body. Assembles around the rod to form the L-ring and probably protects the motor/basal body from shearing forces during rotation. The chain is Flagellar P-ring protein from Pseudothermotoga lettingae (strain ATCC BAA-301 / DSM 14385 / NBRC 107922 / TMO) (Thermotoga lettingae).